The sequence spans 607 residues: MCGIIGIIGNDEVAPRLVDALKRLEYRGYDSAGIATLQNGRLDRRRAEGKLVNLEKRLAGEPLPGVIGIGHTRWATHGRPVERNAHPHITTRLAVVHNGIIENFAELRAMLEAEGRKFETETDTEAVAHLVTRELEKGKSPVEAVRDCLPHLKGAFALAFLFEGDEELLIGARQGPPLAVGYGEGEMFLGSDAIALAPFTDTISYLEDGDWAVLTRNGVSIYDENNKPVERPVQKSQNTNMLVSKGNHRHFMQKEMFEQPEVISHTLANYLDFTTGKVRKEAIGIDFSKVDRLTITACGTAYYAATVAKYWFEQIARLPVDSDIASEFRYREMPLSKDSLAMFVSQSGETADTLASLRYCKAQGLKIASVVNVTGSTIARESDAVFPTLAGPEIGVASTKAFTCQLSAMASLAIAAARARGAIDEVREQELVHQLSEAPRFINQVLKLEDQIAAVCHDLSKVNHVLYLGRGTSFPLAMEGALKLKEISYIHAEGYAAGELKHGPIALIDETMPVIVIAPSDRLYEKTVSNMQEVAARGGRIILITDKKGAESASIDTMATIVLPEVPEFISPLVYALPIQMLAYHTAVLMGTDVDQPRNLAKSVTVE.

Residue Cys2 is the Nucleophile; for GATase activity of the active site. The Glutamine amidotransferase type-2 domain maps to 2 to 217; the sequence is CGIIGIIGND…DGDWAVLTRN (216 aa). SIS domains are found at residues 283-422 and 455-597; these read IGID…ARGA and VCHD…VDQP. The active-site For Fru-6P isomerization activity is the Lys602.

As to quaternary structure, homodimer.

The protein localises to the cytoplasm. It catalyses the reaction D-fructose 6-phosphate + L-glutamine = D-glucosamine 6-phosphate + L-glutamate. Catalyzes the first step in hexosamine metabolism, converting fructose-6P into glucosamine-6P using glutamine as a nitrogen source. This chain is Glutamine--fructose-6-phosphate aminotransferase [isomerizing], found in Brucella suis biovar 1 (strain 1330).